The sequence spans 64 residues: Large ribosomal subunit protein bL28 (64 aa).

It belongs to the bacterial ribosomal protein bL28 family.

This is Large ribosomal subunit protein bL28 from Trichlorobacter lovleyi (strain ATCC BAA-1151 / DSM 17278 / SZ) (Geobacter lovleyi).